Consider the following 335-residue polypeptide: MIEFHNVHKTYRVAGKEIPALHPTNLRVDDGQVFGIIGHSGAGKSTLLRLINRLETPSGGQIVVDGEDVTALDANGLRRFRQQVGMIFQHFNLLASRTVADNVAMPLTLAGDMPRKQIDQRVAELLERVGLSDHAKKYPAQLSGGQKQRVGIARALATKPKILLCDEATSALDPQTTASVLQLLAEINRELKLTIVLITHEMDVIRRVCDQVAVMDAGVIVEQGKVADVFLHPQHSTTKRFVQEDDQVDENEQRDDFAHVQGRIVRLTFQGDATYAPLLGTVARETGVDYSILAGRIDRIKDTPYGQLTLAITGGDMDAAFARFTAADVHMEVLR.

The ABC transporter domain occupies 2-242 (IEFHNVHKTY…PQHSTTKRFV (241 aa)). 38-45 (GHSGAGKS) is a binding site for ATP.

The protein belongs to the ABC transporter superfamily. Methionine importer (TC 3.A.1.24) family. As to quaternary structure, the complex is composed of two ATP-binding proteins (MetN), two transmembrane proteins (MetI) and a solute-binding protein (MetQ).

The protein resides in the cell inner membrane. It catalyses the reaction L-methionine(out) + ATP + H2O = L-methionine(in) + ADP + phosphate + H(+). It carries out the reaction D-methionine(out) + ATP + H2O = D-methionine(in) + ADP + phosphate + H(+). In terms of biological role, part of the ABC transporter complex MetNIQ involved in methionine import. Responsible for energy coupling to the transport system. This Pseudomonas syringae pv. tomato (strain ATCC BAA-871 / DC3000) protein is Methionine import ATP-binding protein MetN 2.